We begin with the raw amino-acid sequence, 522 residues long: 2-isopropylmalate synthase (522 aa).

In terms of domain architecture, Pyruvate carboxyltransferase spans 5-267 (VIIFDTTLRD…ETGINAKEIH (263 aa)). Residues aspartate 14, histidine 202, histidine 204, and asparagine 238 each contribute to the Mn(2+) site. The tract at residues 392 to 522 (QLRQLVVQSD…MHKNRELGGV (131 aa)) is regulatory domain.

It belongs to the alpha-IPM synthase/homocitrate synthase family. LeuA type 1 subfamily. Homodimer. Mn(2+) is required as a cofactor.

The protein localises to the cytoplasm. The catalysed reaction is 3-methyl-2-oxobutanoate + acetyl-CoA + H2O = (2S)-2-isopropylmalate + CoA + H(+). Its pathway is amino-acid biosynthesis; L-leucine biosynthesis; L-leucine from 3-methyl-2-oxobutanoate: step 1/4. In terms of biological role, catalyzes the condensation of the acetyl group of acetyl-CoA with 3-methyl-2-oxobutanoate (2-ketoisovalerate) to form 3-carboxy-3-hydroxy-4-methylpentanoate (2-isopropylmalate). In Shewanella oneidensis (strain ATCC 700550 / JCM 31522 / CIP 106686 / LMG 19005 / NCIMB 14063 / MR-1), this protein is 2-isopropylmalate synthase.